Here is a 595-residue protein sequence, read N- to C-terminus: Indole-3-acetic acid-amido synthetase GH3.3 (595 aa).

The protein belongs to the IAA-amido conjugating enzyme family.

Catalyzes the synthesis of indole-3-acetic acid (IAA)-amino acid conjugates, providing a mechanism for the plant to cope with the presence of excess auxin. Strongly reactive with Glu, Gln, Trp, Asp, Ala, Leu, Phe, Gly, Tyr, Met, Ile and Val. Little or no product formation with His, Ser, Thr, Arg, Lys, or Cys. Also active on pyruvic and butyric acid analogs of IAA, PAA and the synthetic auxin naphthaleneacetic acid (NAA). The two chlorinated synthetic auxin herbicides 2,4-D and 3,6-dichloro-o-anisic acid (dicamba) cannot be used as substrates. In Arabidopsis thaliana (Mouse-ear cress), this protein is Indole-3-acetic acid-amido synthetase GH3.3 (GH3.3).